The chain runs to 122 residues: Large ribosomal subunit protein uL14 (122 aa).

The protein belongs to the universal ribosomal protein uL14 family. In terms of assembly, part of the 50S ribosomal subunit. Forms a cluster with proteins L3 and L19. In the 70S ribosome, L14 and L19 interact and together make contacts with the 16S rRNA in bridges B5 and B8.

Binds to 23S rRNA. Forms part of two intersubunit bridges in the 70S ribosome. The sequence is that of Large ribosomal subunit protein uL14 from Agathobacter rectalis (strain ATCC 33656 / DSM 3377 / JCM 17463 / KCTC 5835 / VPI 0990) (Eubacterium rectale).